Consider the following 485-residue polypeptide: Taxane 13-alpha-hydroxylase (485 aa).

Cys431 lines the heme pocket.

It belongs to the cytochrome P450 family. Requires heme as cofactor.

The catalysed reaction is taxa-4(20),11-dien-5alpha-ol + reduced [NADPH--hemoprotein reductase] + O2 = taxa-4(20),11-dien-5alpha,13alpha-diol + oxidized [NADPH--hemoprotein reductase] + H2O + H(+). The protein operates within alkaloid biosynthesis; taxol biosynthesis. Its function is as follows. Involved in the transformation of a taxadienyl acetate by hydroxylation at C13 to yield taxadien-5-alpha-acetoxy-13-alpha-ol. The sequence is that of Taxane 13-alpha-hydroxylase (CYP725A2) from Taxus cuspidata (Japanese yew).